The primary structure comprises 150 residues: 1,4-dihydroxy-2-naphthoyl-CoA hydrolase (150 aa).

Asp19 is a catalytic residue.

This sequence belongs to the 4-hydroxybenzoyl-CoA thioesterase family. DHNA-CoA hydrolase subfamily.

It carries out the reaction 1,4-dihydroxy-2-naphthoyl-CoA + H2O = 1,4-dihydroxy-2-naphthoate + CoA + H(+). Its pathway is cofactor biosynthesis; phylloquinone biosynthesis. The protein operates within quinol/quinone metabolism; 1,4-dihydroxy-2-naphthoate biosynthesis; 1,4-dihydroxy-2-naphthoate from chorismate: step 7/7. Its function is as follows. Catalyzes the hydrolysis of 1,4-dihydroxy-2-naphthoyl-CoA (DHNA-CoA) to 1,4-dihydroxy-2-naphthoate (DHNA), a reaction involved in phylloquinone (vitamin K1) biosynthesis. This is 1,4-dihydroxy-2-naphthoyl-CoA hydrolase from Prochlorococcus marinus (strain AS9601).